A 139-amino-acid chain; its full sequence is MKPAARRRARECAVQALYSWQLSRNDIADVEYQFLAEQDVKDVDVLYFRELLAGVATNTAYLDGLMKPYLSRLLEELGQVEKAVLRIALFELSKRSDVPYKVAINEAIELAKTFGAEDSHKFVNGVLDKAAPVIRPNKK.

The protein belongs to the NusB family.

In terms of biological role, involved in transcription antitermination. Required for transcription of ribosomal RNA (rRNA) genes. Binds specifically to the boxA antiterminator sequence of the ribosomal RNA (rrn) operons. This is Transcription antitermination protein NusB from Escherichia fergusonii (strain ATCC 35469 / DSM 13698 / CCUG 18766 / IAM 14443 / JCM 21226 / LMG 7866 / NBRC 102419 / NCTC 12128 / CDC 0568-73).